The following is a 1510-amino-acid chain: Chromosome partition protein MukB (1510 aa).

Residues Glu-6–Asp-30 are a coiled coil. Gly-75 to Ser-82 is a binding site for ATP. Coiled-coil stretches lie at residues Gln-346–Ser-506, Gln-553–Ala-633, Met-673–Gln-706, Arg-821–Phe-847, Glu-876–Gln-1064, Glu-1094–Val-1149, and Asp-1249–Ser-1305. Positions Pro-707–Arg-824 are flexible hinge.

The protein belongs to the SMC family. MukB subfamily. In terms of assembly, homodimerization via its hinge domain. Binds to DNA via its C-terminal region. Interacts, and probably forms a ternary complex, with MukE and MukF via its C-terminal region. The complex formation is stimulated by calcium or magnesium. Interacts with tubulin-related protein FtsZ.

Its subcellular location is the cytoplasm. It is found in the nucleoid. Plays a central role in chromosome condensation, segregation and cell cycle progression. Functions as a homodimer, which is essential for chromosome partition. Involved in negative DNA supercoiling in vivo, and by this means organize and compact chromosomes. May achieve or facilitate chromosome segregation by condensation DNA from both sides of a centrally located replisome during cell division. The chain is Chromosome partition protein MukB from Haemophilus influenzae (strain 86-028NP).